Consider the following 184-residue polypeptide: Translation initiation factor IF-3 (184 aa).

Belongs to the IF-3 family. As to quaternary structure, monomer.

The protein localises to the cytoplasm. In terms of biological role, IF-3 binds to the 30S ribosomal subunit and shifts the equilibrium between 70S ribosomes and their 50S and 30S subunits in favor of the free subunits, thus enhancing the availability of 30S subunits on which protein synthesis initiation begins. This chain is Translation initiation factor IF-3, found in Hamiltonella defensa subsp. Acyrthosiphon pisum (strain 5AT).